Here is a 103-residue protein sequence, read N- to C-terminus: MATMKIKKGDLVKVIAGKDINNEGKVIAVNAKNNTLLVEGINMVTKHTKPSMSNQQGGIVHQEAPIDASNVMLIHDGKPTRVGFKMDGDKKVRFAKSTGKVID.

Belongs to the universal ribosomal protein uL24 family. Part of the 50S ribosomal subunit.

Its function is as follows. One of two assembly initiator proteins, it binds directly to the 5'-end of the 23S rRNA, where it nucleates assembly of the 50S subunit. In terms of biological role, one of the proteins that surrounds the polypeptide exit tunnel on the outside of the subunit. The protein is Large ribosomal subunit protein uL24 of Agathobacter rectalis (strain ATCC 33656 / DSM 3377 / JCM 17463 / KCTC 5835 / VPI 0990) (Eubacterium rectale).